The primary structure comprises 122 residues: Basic phospholipase A2 Cdr-12 (122 aa).

Cystine bridges form between Cys26–Cys115, Cys28–Cys44, Cys43–Cys95, Cys49–Cys122, Cys50–Cys88, Cys57–Cys81, and Cys75–Cys86. Ca(2+) contacts are provided by Tyr27, Gly29, and Gly31. His47 is an active-site residue. Position 48 (Asp48) interacts with Ca(2+). Residue Asp89 is part of the active site.

The cofactor is Ca(2+). Expressed by the venom gland.

The protein localises to the secreted. It carries out the reaction a 1,2-diacyl-sn-glycero-3-phosphocholine + H2O = a 1-acyl-sn-glycero-3-phosphocholine + a fatty acid + H(+). In terms of biological role, snake venom phospholipase A2 (PLA2) that induces myonecrosis and edema upon intramuscular injections in mice. In vitro, causes a potent blockade of neuromuscular transmission in young chicken biventer cervicis preparation and produces cytotoxicity in murine C2C12 skeletal muscle myotubes and lack cytolytic activity upon myoblasts in vitro. PLA2 catalyzes the calcium-dependent hydrolysis of the 2-acyl groups in 3-sn-phosphoglycerides. In Crotalus durissus ruruima (South American rattlesnake), this protein is Basic phospholipase A2 Cdr-12.